Consider the following 804-residue polypeptide: Protein-lysine N-methyltransferase SMYD4 (804 aa).

An S-adenosyl-L-methionine-binding site is contributed by 112–114 (RSA). The SET domain occupies 233–574 (SSVGLCIDPL…KGQEILHCYG (342 aa)). Residues Cys296, Cys299, Cys309, Cys312, Cys318, Cys322, His331, and Cys335 each contribute to the Zn(2+) site. The MYND-type zinc finger occupies 296–335 (CHRCLKHTLATVPCDGCSYAKYCSQECLQQAWELYHRTEC). Residues Asn427, 539–540 (NH), Tyr573, and Phe595 contribute to the S-adenosyl-L-methionine site.

Belongs to the class V-like SAM-binding methyltransferase superfamily. As to quaternary structure, interacts (via MYND-type zinc finger) with HDAC1.

The protein localises to the nucleus. Its subcellular location is the cytoplasm. The enzyme catalyses L-lysyl-[protein] + S-adenosyl-L-methionine = N(6)-methyl-L-lysyl-[protein] + S-adenosyl-L-homocysteine + H(+). In terms of biological role, protein-lysine N-methyltransferase. Monomethylates PRMT5, modulating its transcriptional activity. May also act as a histone methyltransferase. Plays a critical role in cardiac development. Acts as a key epigenetic regulator of gene expression during cardiac development via its dual activities as a methyltransferase and negative regulator of HDAC1. The sequence is that of Protein-lysine N-methyltransferase SMYD4 (SMYD4) from Pongo abelii (Sumatran orangutan).